We begin with the raw amino-acid sequence, 397 residues long: L-cysteine desulfidase (397 aa).

The active-site Proton acceptor is C23. Residues C288, C330, and C337 each coordinate [4Fe-4S] cluster.

The protein belongs to the L-cysteine desulfidase family. In terms of assembly, homotrimer. The cofactor is [4Fe-4S] cluster.

It carries out the reaction L-cysteine + H2O = hydrogen sulfide + pyruvate + NH4(+) + H(+). Catalyzes the cleavage of L-cysteine to form 2-aminoprop-2-enoate and sulfide. The former then spontaneously hydrolyzes to pyruvate and NH(3). May be responsible for the production of sulfide required for the biosynthesis of iron-sulfur centers in this archaea. In Methanococcus maripaludis (strain C5 / ATCC BAA-1333), this protein is L-cysteine desulfidase.